Here is a 78-residue protein sequence, read N- to C-terminus: Protein Class8-like (78 aa).

Positions 1 to 19 (MRTLVVLLIGAVLLCSANA) are cleaved as a signal peptide. The propeptide occupies 20–36 (FLDELLAESVNDMTDKR). Positions 38-78 (CFDKYKSNICGGVISPAHCVRRSGRMAKFAKENCAHFCGFC) constitute a ShKT domain. Intrachain disulfides connect C38-C78, C47-C71, and C56-C75.

As to expression, expressed in ganglion neurons residing in the mesoglea (observed in both planulae and primary polyps). Not expressed in nematocytes.

In terms of biological role, probable neuropeptide. The chain is Protein Class8-like from Nematostella vectensis (Starlet sea anemone).